Here is a 117-residue protein sequence, read N- to C-terminus: UPF0102 protein YPN_3432 (117 aa).

Belongs to the UPF0102 family.

The sequence is that of UPF0102 protein YPN_3432 from Yersinia pestis bv. Antiqua (strain Nepal516).